Consider the following 101-residue polypeptide: Small ribosomal subunit protein bS6 (101 aa).

It belongs to the bacterial ribosomal protein bS6 family.

In terms of biological role, binds together with bS18 to 16S ribosomal RNA. The sequence is that of Small ribosomal subunit protein bS6 from Nitratidesulfovibrio vulgaris (strain DSM 19637 / Miyazaki F) (Desulfovibrio vulgaris).